Reading from the N-terminus, the 732-residue chain is MMWTWALWMLPSLCKFSLAALPAKPENISCVYYYRKNLTCTWSPGKETSYTQYTVKRTYAFGEKHDNCTTNSSTSENRASCSFFLPRITIPDNYTIEVEAENGDGVIKSHMTYWRLENIAKTEPPKIFRVKPVLGIKRMIQIEWIKPELAPVSSDLKYTLRFRTVNSTSWMEVNFAKNRKDKNQTYNLTGLQPFTEYVIALRCAVKESKFWSDWSQEKMGMTEEEAPCGLELWRVLKPAEADGRRPVRLLWKKARGAPVLEKTLGYNIWYYPESNTNLTETMNTTNQQLELHLGGESFWVSMISYNSLGKSPVATLRIPAIQEKSFQCIEVMQACVAEDQLVVKWQSSALDVNTWMIEWFPDVDSEPTTLSWESVSQATNWTIQQDKLKPFWCYNISVYPMLHDKVGEPYSIQAYAKEGVPSEGPETKVENIGVKTVTITWKEIPKSERKGIICNYTIFYQAEGGKGFSKTVNSSILQYGLESLKRKTSYIVQVMASTSAGGTNGTSINFKTLSFSVFEIILITSLIGGGLLILIILTVAYGLKKPNKLTHLCWPTVPNPAESSIATWHGDDFKDKLNLKESDDSVNTEDRILKPCSTPSDKLVIDKLVVNFGNVLQEIFTDEARTGQENNLGGEKNGYVTCPFRPDCPLGKSFEELPVSPEIPPRKSQYLRSRMPEGTRPEAKEQLLFSGQSLVPDHLCEEGAPNPYLKNSVTAREFLVSEKLPEHTKGEV.

Positions 1-19 (MMWTWALWMLPSLCKFSLA) are cleaved as a signal peptide. Residues 20-519 (ALPAKPENIS…FKTLSFSVFE (500 aa)) lie on the Extracellular side of the membrane. 5 Fibronectin type-III domains span residues 24–122 (KPEN…IAKT), 124–225 (PPKI…TEEE), 223–315 (EEEA…PVAT), 319–416 (PAIQ…QAYA), and 421–515 (PSEG…TLSF). N-linked (GlcNAc...) asparagine glycosylation is found at Asn37, Asn67, Asn93, Asn166, Asn187, Asn277, Asn283, Asn395, Asn455, and Asn504. A helical membrane pass occupies residues 520–540 (IILITSLIGGGLLILIILTVA). Residues 541–732 (YGLKKPNKLT…KLPEHTKGEV (192 aa)) are Cytoplasmic-facing.

Belongs to the type I cytokine receptor family. Type 2 subfamily. In terms of assembly, heterodimer with OSMR. Interacts with JAK1 and STAT3. In terms of processing, N-glycosylated. Expressed in CD14- and CD56-positive blood cells. Expressed in macrophages. Expressed in keratinocytes. Expressed in a subset of dorsal root ganglia neurons (at protein level). Expressed at low levels in testis, ovary, brain, prostate, placenta, thymus, bone marrow, trachea and skin. Expressed in bronchial and alveolar epithelial cells and pulmonary fibroblasts. Detected in all of the myelomonocytic lineage. Isoform 6: Expressed at higher levels in lesional skin compared to healthy skin of atopic dermatitis patients.

The protein localises to the cell membrane. The protein resides in the presynaptic cell membrane. It is found in the cell projection. Its subcellular location is the axon. In terms of biological role, associates with OSMR to form the interleukin-31 receptor which activates STAT3 and to a lower extent STAT1 and STAT5. May function in skin immunity. Mediates IL31-induced itch, probably in a manner dependent on cation channels TRPA1 and TRPV1. Positively regulates numbers and cycling status of immature subsets of myeloid progenitor cells in bone marrow in vivo and enhances myeloid progenitor cell survival in vitro. In Homo sapiens (Human), this protein is Interleukin-31 receptor subunit alpha (IL31RA).